The primary structure comprises 443 residues: Ribosomal protein uS12 methylthiotransferase RimO (443 aa).

Residues 9–119 form the MTTase N-terminal domain; sequence PKIGMVSLGC…VVSAVHDAAP (111 aa). [4Fe-4S] cluster-binding residues include cysteine 18, cysteine 54, cysteine 83, cysteine 150, cysteine 154, and cysteine 157. The Radical SAM core domain occupies 136 to 373; it reads LTPRHYSYLK…MEKAAQISEA (238 aa). A TRAM domain is found at 376–443; sequence QAKIGRDIAT…EHDLFGVALS (68 aa).

This sequence belongs to the methylthiotransferase family. RimO subfamily. The cofactor is [4Fe-4S] cluster.

The protein localises to the cytoplasm. It catalyses the reaction L-aspartate(89)-[ribosomal protein uS12]-hydrogen + (sulfur carrier)-SH + AH2 + 2 S-adenosyl-L-methionine = 3-methylsulfanyl-L-aspartate(89)-[ribosomal protein uS12]-hydrogen + (sulfur carrier)-H + 5'-deoxyadenosine + L-methionine + A + S-adenosyl-L-homocysteine + 2 H(+). Functionally, catalyzes the methylthiolation of an aspartic acid residue of ribosomal protein uS12. This Zymomonas mobilis subsp. mobilis (strain ATCC 31821 / ZM4 / CP4) protein is Ribosomal protein uS12 methylthiotransferase RimO.